Reading from the N-terminus, the 467-residue chain is Metal transporter cnnm-4 (467 aa).

Topologically, residues 1–110 are extracellular; the sequence is MELYAAGRYD…EIPEGKDKTR (110 aa). The N-linked (GlcNAc...) asparagine glycan is linked to asparagine 61. In terms of domain architecture, CNNM transmembrane spans 107 to 293; it reads DKTRVYFMMP…LEDEEAADGN (187 aa). A helical transmembrane segment spans residues 111–131; that stretch reads VYFMMPLLVLCLGLSATFSGL. Residues 132–170 lie on the Cytoplasmic side of the membrane; it reads NLAIMSFSINDLKLIQESDSDKLMKQRAMDVMRLRRNSN. The helical transmembrane segment at 171-191 threads the bilayer; that stretch reads FVLVTIIFGNCFCNISITLLM. Residues 192–196 are Extracellular-facing; the sequence is NYFAE. A helical membrane pass occupies residues 197 to 217; it reads FYGFGGFIFVELISTALLLIF. Topologically, residues 218–238 are cytoplasmic; the sequence is TEILPSLIFTKNALAIASRLQ. Residues 239–259 traverse the membrane as a helical segment; that stretch reads YFVIFTMCITSPISYPLAMLL. Topologically, residues 260-467 are extracellular; that stretch reads NIILGKENAD…IFDEKDARQE (208 aa). CBS domains lie at 317–381 and 394–461; these read MTEI…GSDT and KRRK…IFDE. A glycan (N-linked (GlcNAc...) asparagine) is linked at asparagine 364.

The protein belongs to the ACDP family.

It localises to the cell membrane. In terms of biological role, probable metal transporter. Probably acts redundantly with the other metal transport proteins cnnm-1, cnnm-2, cnnm-3 and cnnm-5 to regulate Mg(2+) homeostasis. The protein is Metal transporter cnnm-4 of Caenorhabditis elegans.